Consider the following 362-residue polypeptide: Chorismate synthase (362 aa).

Residue Arg-47 coordinates NADP(+). Residues 124 to 126 (RAS), Gly-286, 301 to 305 (KPTAT), and Arg-327 each bind FMN.

It belongs to the chorismate synthase family. As to quaternary structure, homotetramer. It depends on FMNH2 as a cofactor.

It carries out the reaction 5-O-(1-carboxyvinyl)-3-phosphoshikimate = chorismate + phosphate. Its pathway is metabolic intermediate biosynthesis; chorismate biosynthesis; chorismate from D-erythrose 4-phosphate and phosphoenolpyruvate: step 7/7. Its function is as follows. Catalyzes the anti-1,4-elimination of the C-3 phosphate and the C-6 proR hydrogen from 5-enolpyruvylshikimate-3-phosphate (EPSP) to yield chorismate, which is the branch point compound that serves as the starting substrate for the three terminal pathways of aromatic amino acid biosynthesis. This reaction introduces a second double bond into the aromatic ring system. This chain is Chorismate synthase, found in Prochlorococcus marinus (strain MIT 9303).